The chain runs to 436 residues: Enolase (436 aa).

A (2R)-2-phosphoglycerate-binding site is contributed by Q167. E209 serves as the catalytic Proton donor. Positions 246, 291, and 318 each coordinate Mg(2+). (2R)-2-phosphoglycerate contacts are provided by K343, R372, S373, and K394. The active-site Proton acceptor is K343.

It belongs to the enolase family. As to quaternary structure, component of the RNA degradosome, a multiprotein complex involved in RNA processing and mRNA degradation. Requires Mg(2+) as cofactor.

It is found in the cytoplasm. The protein localises to the secreted. Its subcellular location is the cell surface. The enzyme catalyses (2R)-2-phosphoglycerate = phosphoenolpyruvate + H2O. The protein operates within carbohydrate degradation; glycolysis; pyruvate from D-glyceraldehyde 3-phosphate: step 4/5. Its function is as follows. Catalyzes the reversible conversion of 2-phosphoglycerate (2-PG) into phosphoenolpyruvate (PEP). It is essential for the degradation of carbohydrates via glycolysis. This is Enolase from Haemophilus influenzae (strain PittEE).